The primary structure comprises 742 residues: Photosystem I P700 chlorophyll a apoprotein A2 2 (742 aa).

Helical transmembrane passes span 46 to 69 (IFAT…FHVA), 135 to 158 (LYQG…LHLQ), 175 to 199 (LNHH…HVAI), 273 to 291 (MAHH…GHMY), 334 to 357 (LHFQ…QHMY), 373 to 399 (AALY…IFWV), 421 to 443 (AIIS…LYVH), and 524 to 542 (FLVH…LICV). Residues C566 and C575 each contribute to the [4Fe-4S] cluster site. Transmembrane regions (helical) follow at residues 583–604 (SFYL…YWHW) and 651–673 (LSVW…MFLI). Residues H662, M670, and Y678 each contribute to the chlorophyll a site. W679 is a binding site for phylloquinone. The helical transmembrane segment at 715–735 (LVGLAHFTVGYILTYAAFLIA) threads the bilayer.

Belongs to the PsaA/PsaB family. As to quaternary structure, the PsaA/B heterodimer binds the P700 chlorophyll special pair and subsequent electron acceptors. PSI consists of a core antenna complex that captures photons, and an electron transfer chain that converts photonic excitation into a charge separation. The cyanobacterial PSI reaction center is composed of one copy each of PsaA,B,C,D,E,F,I,J,K,L,M and X, and forms trimeric complexes. It depends on PSI electron transfer chain: 5 chlorophyll a, 1 chlorophyll a', 2 phylloquinones and 3 4Fe-4S clusters. PSI core antenna: 90 chlorophyll a, 22 carotenoids, 3 phospholipids and 1 galactolipid. P700 is a chlorophyll a/chlorophyll a' dimer, A0 is one or more chlorophyll a, A1 is one or both phylloquinones and FX is a shared 4Fe-4S iron-sulfur center. as a cofactor.

Its subcellular location is the cellular thylakoid membrane. It carries out the reaction reduced [plastocyanin] + hnu + oxidized [2Fe-2S]-[ferredoxin] = oxidized [plastocyanin] + reduced [2Fe-2S]-[ferredoxin]. Functionally, psaA and PsaB bind P700, the primary electron donor of photosystem I (PSI), as well as the electron acceptors A0, A1 and FX. PSI is a plastocyanin/cytochrome c6-ferredoxin oxidoreductase, converting photonic excitation into a charge separation, which transfers an electron from the donor P700 chlorophyll pair to the spectroscopically characterized acceptors A0, A1, FX, FA and FB in turn. Oxidized P700 is reduced on the lumenal side of the thylakoid membrane by plastocyanin or cytochrome c6. The protein is Photosystem I P700 chlorophyll a apoprotein A2 2 of Trichormus variabilis (strain ATCC 29413 / PCC 7937) (Anabaena variabilis).